Consider the following 381-residue polypeptide: Neutral protease 2 homolog mep20 (381 aa).

Positions 1–19 (MRFTALASAILPLACNVLA) are cleaved as a signal peptide. A propeptide spanning residues 20–193 (LPAKTGEAPK…ASAVKPLDKR (174 aa)) is cleaved from the precursor. 2 disulfide bridges follow: C199–C271 and C278–C296. Position 321 (H321) interacts with Zn(2+). E322 is a catalytic residue. Residues H325 and D336 each coordinate Zn(2+).

The protein belongs to the peptidase M35 family. Zn(2+) serves as cofactor.

The catalysed reaction is Preferential cleavage of bonds with hydrophobic residues in P1'. Also 3-Asn-|-Gln-4 and 8-Gly-|-Ser-9 bonds in insulin B chain.. Its function is as follows. Secreted metalloproteinase that allows assimilation of proteinaceous substrates. Shows high activities on basic nuclear substrates such as histone and protamine. This Aspergillus flavus protein is Neutral protease 2 homolog mep20 (mep20).